The sequence spans 148 residues: MSEPIKLHDLRPAKGANKPKTRVGRGEASKGKTAGRGTKGTKARKQVSAAFEGGQMPLHMRLPKLKGFKNPAKVYYQVVNVSDLEKAFPQGGEIAVADIVAKGLVRPKQPVKVLGNGEISVKLNVTATKFSKSAVEKIEAAGGSVTEA.

A compositionally biased stretch (basic and acidic residues) spans 1–12 (MSEPIKLHDLRP). The tract at residues 1–52 (MSEPIKLHDLRPAKGANKPKTRVGRGEASKGKTAGRGTKGTKARKQVSAAFE) is disordered.

It belongs to the universal ribosomal protein uL15 family. Part of the 50S ribosomal subunit.

Binds to the 23S rRNA. This Corynebacterium diphtheriae (strain ATCC 700971 / NCTC 13129 / Biotype gravis) protein is Large ribosomal subunit protein uL15.